Here is a 585-residue protein sequence, read N- to C-terminus: Arginine--tRNA ligase (585 aa).

The short motif at 131–141 is the 'HIGH' region element; it reads ANPTGPMHVGH.

It belongs to the class-I aminoacyl-tRNA synthetase family. As to quaternary structure, monomer.

It localises to the cytoplasm. The catalysed reaction is tRNA(Arg) + L-arginine + ATP = L-arginyl-tRNA(Arg) + AMP + diphosphate. The chain is Arginine--tRNA ligase from Bartonella tribocorum (strain CIP 105476 / IBS 506).